We begin with the raw amino-acid sequence, 677 residues long: Methionine--tRNA ligase (677 aa).

Positions 15-25 (PYANGSIHLGH) match the 'HIGH' region motif. Zn(2+) contacts are provided by Cys146, Cys149, Cys159, and Cys162. The short motif at 333-337 (KMSKS) is the 'KMSKS' region element. Lys336 lines the ATP pocket. The tRNA-binding domain occupies 575 to 677 (DFAKVDLRVA…AGAKPGHQVK (103 aa)).

The protein belongs to the class-I aminoacyl-tRNA synthetase family. MetG type 1 subfamily. As to quaternary structure, homodimer. Zn(2+) is required as a cofactor.

The protein resides in the cytoplasm. It catalyses the reaction tRNA(Met) + L-methionine + ATP = L-methionyl-tRNA(Met) + AMP + diphosphate. Is required not only for elongation of protein synthesis but also for the initiation of all mRNA translation through initiator tRNA(fMet) aminoacylation. The chain is Methionine--tRNA ligase from Escherichia coli O6:K15:H31 (strain 536 / UPEC).